We begin with the raw amino-acid sequence, 90 residues long: Phenol 2-monooxygenase, stimulatory component DmpM (90 aa).

Belongs to the TmoD/XamoD family. As to quaternary structure, active as a monomer. Formation of dimers inactivates the protein. The multicomponent enzyme phenol hydroxylase is formed by DmpL (P1 component), DmpM (P2 component), DmpN (P3 component), DmpO (P4 component) and DmpP (P5 component).

The catalysed reaction is phenol + NADH + O2 + H(+) = catechol + NAD(+) + H2O. It participates in aromatic compound metabolism; phenol degradation. Functionally, part of a multicomponent enzyme which catalyzes the degradation of phenol and some of its methylated derivatives. DmpM is a regulatory subunit that stimulates the phenol hydroxylase activity of the complex. The steady-state rate of phenol hydroxylase turnover is dependent on the DmpM concentration, with a maximum observed rate at about 1.5 DmpM per oxygenase monomer. Higher concentrations of DmpM inhibit phenol hydroxylase activity. May act by altering the redox potential of the oxygenase. Required for growth on phenol and for in vitro phenol hydroxylase activity. The protein is Phenol 2-monooxygenase, stimulatory component DmpM of Pseudomonas sp. (strain CF600).